A 106-amino-acid chain; its full sequence is Large ribosomal subunit protein bL21 (106 aa).

It belongs to the bacterial ribosomal protein bL21 family. As to quaternary structure, part of the 50S ribosomal subunit. Contacts protein L20.

This protein binds to 23S rRNA in the presence of protein L20. In Xanthomonas campestris pv. campestris (strain ATCC 33913 / DSM 3586 / NCPPB 528 / LMG 568 / P 25), this protein is Large ribosomal subunit protein bL21.